The primary structure comprises 397 residues: Major outer membrane porin, serovar L3 (397 aa).

The N-terminal stretch at 1 to 22 (MKKLLKSVLVFAALSSASSLQA) is a signal peptide.

Belongs to the chlamydial porin (CP) (TC 1.B.2) family. In terms of assembly, part of a disulfide cross-linked outer membrane complex (COMC) composed of the major outer membrane porin (MOMP), the small cysteine-rich protein (OmcA) and the large cysteine-rich periplasmic protein (OmcB).

The protein localises to the cell outer membrane. Its function is as follows. In elementary bodies (EBs, the infectious stage, which is able to survive outside the host cell) provides the structural integrity of the outer envelope through disulfide cross-links with the small cysteine-rich protein and the large cysteine-rich periplasmic protein. It has been described in publications as the Sarkosyl-insoluble COMC (Chlamydia outer membrane complex), and serves as the functional equivalent of peptidoglycan. Permits diffusion of specific solutes through the outer membrane. The protein is Major outer membrane porin, serovar L3 (ompA) of Chlamydia trachomatis.